Here is a 381-residue protein sequence, read N- to C-terminus: Queuine tRNA-ribosyltransferase (381 aa).

The Proton acceptor role is filled by aspartate 103. Substrate-binding positions include 103 to 107 (DSGGF), aspartate 157, glutamine 200, and glycine 227. An RNA binding region spans residues 258–264 (GVGTYRE). Aspartate 277 acts as the Nucleophile in catalysis. Residues 282–286 (TRLAR) are RNA binding; important for wobble base 34 recognition. Positions 315, 317, 320, and 346 each coordinate Zn(2+).

The protein belongs to the queuine tRNA-ribosyltransferase family. Homodimer. Within each dimer, one monomer is responsible for RNA recognition and catalysis, while the other monomer binds to the replacement base PreQ1. Requires Zn(2+) as cofactor.

It catalyses the reaction 7-aminomethyl-7-carbaguanine + guanosine(34) in tRNA = 7-aminomethyl-7-carbaguanosine(34) in tRNA + guanine. Its pathway is tRNA modification; tRNA-queuosine biosynthesis. Functionally, catalyzes the base-exchange of a guanine (G) residue with the queuine precursor 7-aminomethyl-7-deazaguanine (PreQ1) at position 34 (anticodon wobble position) in tRNAs with GU(N) anticodons (tRNA-Asp, -Asn, -His and -Tyr). Catalysis occurs through a double-displacement mechanism. The nucleophile active site attacks the C1' of nucleotide 34 to detach the guanine base from the RNA, forming a covalent enzyme-RNA intermediate. The proton acceptor active site deprotonates the incoming PreQ1, allowing a nucleophilic attack on the C1' of the ribose to form the product. After dissociation, two additional enzymatic reactions on the tRNA convert PreQ1 to queuine (Q), resulting in the hypermodified nucleoside queuosine (7-(((4,5-cis-dihydroxy-2-cyclopenten-1-yl)amino)methyl)-7-deazaguanosine). This Cyanothece sp. (strain PCC 7425 / ATCC 29141) protein is Queuine tRNA-ribosyltransferase.